The primary structure comprises 142 residues: MPPKKKVVGLIKLQIQAGQANPAPPVGPALGQHGVNIMEFCKAYNAATEAQRGNVIPVEITVYEDRSFTFALKTPPAAKLLLKAAGVPKGSGEPHKTKVAKVTWDQVREIAETKKEDLNANDIDAAAKIIAGTARSMGITVE.

This sequence belongs to the universal ribosomal protein uL11 family. Part of the ribosomal stalk of the 50S ribosomal subunit. Interacts with L10 and the large rRNA to form the base of the stalk. L10 forms an elongated spine to which L12 dimers bind in a sequential fashion forming a multimeric L10(L12)X complex. One or more lysine residues are methylated.

Its function is as follows. Forms part of the ribosomal stalk which helps the ribosome interact with GTP-bound translation factors. This Mycolicibacterium vanbaalenii (strain DSM 7251 / JCM 13017 / BCRC 16820 / KCTC 9966 / NRRL B-24157 / PYR-1) (Mycobacterium vanbaalenii) protein is Large ribosomal subunit protein uL11.